A 182-amino-acid chain; its full sequence is Chromophore lyase CpcS/CpeS (182 aa).

The protein belongs to the CpcS/CpeS biliprotein lyase family.

In terms of biological role, covalently attaches a chromophore to Cys residue(s) of phycobiliproteins. The protein is Chromophore lyase CpcS/CpeS of Thermosynechococcus vestitus (strain NIES-2133 / IAM M-273 / BP-1).